The following is a 106-amino-acid chain: Transcriptional and immune response regulator (106 aa).

As to quaternary structure, monomer. Interacts with NOTCH2 (via ANK repeats), the interaction inhibits the nuclear translocation of NOTCH2 N2ICD. Interacts (C-terminus) with CBY1 (C-terminus), TCIM competes with CTNNB1 for the interaction with CBY1. As to expression, ubiquitous. Expressed in thyroid papillary carcinoma. Expressed in liver, expression levels decrease in hepatocellular carcinoma. Slightly detected in normal lung, its expression is highly induced in lung cancer cells (at protein level).

It is found in the cytoplasm. It localises to the nucleus. The protein localises to the nucleolus. The protein resides in the nucleus speckle. Its function is as follows. Seems to be involved in the regulation of cell growth an differentiation, may play different and opposite roles depending on the tissue or cell type. May enhance the WNT-CTNNB1 pathway by relieving antagonistic activity of CBY1. Enhances the proliferation of follicular dendritic cells. Plays a role in the mitogen-activated MAPK2/3 signaling pathway, positively regulates G1-to-S-phase transition of the cell cycle. In endothelial cells, enhances key inflammatory mediators and inflammatory response through the modulation of NF-kappaB transcriptional regulatory activity. Involved in the regulation of heat shock response, seems to play a positive feedback with HSF1 to modulate heat-shock downstream gene expression. Plays a role in the regulation of hematopoiesis even if the mechanisms are unknown. In cancers such as thyroid or lung cancer, it has been described as promoter of cell proliferation, G1-to-S-phase transition and inhibitor of apoptosis. However, it negatively regulates self-renewal of liver cancer cells via suppresion of NOTCH2 signaling. This is Transcriptional and immune response regulator from Homo sapiens (Human).